Here is a 37-residue protein sequence, read N- to C-terminus: Large ribosomal subunit protein bL36c (37 aa).

The protein belongs to the bacterial ribosomal protein bL36 family.

It localises to the plastid. The protein resides in the chloroplast. The protein is Large ribosomal subunit protein bL36c of Chaetosphaeridium globosum (Charophycean green alga).